The following is a 225-amino-acid chain: Polyadenylate-binding protein 2 (225 aa).

Acidic residues predominate over residues 1–36; that stretch reads MADEDISLNEDQLLESMEETNGEQETEIVTETEEEG. The interval 1–42 is disordered; the sequence is MADEDISLNEDQLLESMEETNGEQETEIVTETEEEGSMQIDP. A coiled-coil region spans residues 14–74; sequence LESMEETNGE…QSEVDKQMAG (61 aa). In terms of domain architecture, RRM spans 96 to 173; that stretch reads RSVYVGNVDY…RQIKVMSKRT (78 aa).

It is found in the nucleus. The protein localises to the cytoplasm. Functionally, involved in the 3'-end formation of mRNA precursors (pre-mRNA) by the addition of a poly(A) tail of 200-250 nt to the upstream cleavage product. Stimulates poly(A) polymerase (PAPOLA) conferring processivity on the poly(A) tail elongation reaction and also controls the poly(A) tail length. Increases the affinity of poly(A) polymerase for RNA. Binds to poly(A) and to poly(G) with high affinity. May protect the poly(A) tail from degradation. The protein is Polyadenylate-binding protein 2 of Drosophila pseudoobscura pseudoobscura (Fruit fly).